Here is a 951-residue protein sequence, read N- to C-terminus: MAFANFRRILRLPNFEKKRLREYEHVRRDLDPNQVWEIIGELGDGAFGKVYKAKNKETGILAAAKVIETKNEEELEDYMVEIEILATCNHHFIVKLLGSYYWEGKLWIMIEFCPGGAVDAIMLELDRGLKEPEIRTICRQMLEGLTYLHSMKMIHRDLKAGNVLLTLDGDIKLADFGVSAKNVKTLQRRDSFIGTPYWMAPEVVMCETMKDAPYDYKADIWSLGITLIEMAQIEPPHHELNPMRVLLKIAKSEPPTLSSPSKWSPEFHNFLKTALDKNPETRPSAAQLLEHPFVKKVSGNKPLRDLVAEAKAEVLDEIEENGEVEEEEASDTPSSNKSVSQSALGEKDKHTGKEHVGNGIKAEPQNTDSQADIHSQKRNHEGKNYPEHNRHDAVNGKPDIIILNPVSSNHEPKRNSAAESYRNEEHGSAVSSNQRPKSSQSDRQSVELVPNGSFDSPTRYFTGWSKRDSDSGSNSASESMDISMNLSADLSINKETGSLSLRESRLHKKTLKRTRRFVVDGVEVSITTSKIIGDDEKKDEEMRFLRRQELRELRLLQKEEHRNQAQLTSKHSFQMEQMLRRFEQEMNSKRKFYDSELEALERHQKQQIERMEQEHALRRRDEARRIRTEQERDHVKFLEQLKLRKKELKAQVEKLPRQQRRDAMKVQMDDFAQKKHIEEQQFLNKQKEDLTLALRVIVLENRKEIYNKEREFLNKKQQLLRDREAVIWDLEERHLQERHQLVKQQLKDQYFLQRHELLRKHEKEQEQMQRYNQRMMEQLKLRQQQERARLPKNQKAEAKTRMTMFKKSLHISPSGSAAEQREKIKQFSLQEEKRQKAERLQQQQKHEHQLLEMQAECDCNVRDLLQMQNEKCHLLVEHETQKLKTLDEHHIQMIREWRENLRPRKKALEDELEHKKEEQEMFFRMNEEVAGHPFPSNKPAKFYSFSSPEAS.

The 259-residue stretch at 36-294 (WEIIGELGDG…AAQLLEHPFV (259 aa)) folds into the Protein kinase domain. ATP contacts are provided by residues 42 to 50 (LGDGAFGKV) and lysine 65. Aspartate 157 serves as the catalytic Proton acceptor. Residues 319 to 330 (EENGEVEEEEAS) show a composition bias toward acidic residues. The interval 319–479 (EENGEVEEEE…DSGSNSASES (161 aa)) is disordered. Over residues 331–343 (DTPSSNKSVSQSA) the composition is skewed to polar residues. A compositionally biased stretch (basic and acidic residues) spans 345–356 (GEKDKHTGKEHV). Positions 364 to 373 (PQNTDSQADI) are enriched in polar residues. 2 stretches are compositionally biased toward basic and acidic residues: residues 374–394 (HSQK…HDAV) and 410–427 (HEPK…EEHG). Polar residues predominate over residues 429-443 (AVSSNQRPKSSQSDR). Phosphoserine; by PLK1 occurs at positions 483, 487, and 491. A coiled-coil region spans residues 583–723 (EQEMNSKRKF…NKKQQLLRDR (141 aa)). Residues 785 to 800 (QERARLPKNQKAEAKT) show a composition bias toward basic and acidic residues. The disordered stretch occupies residues 785-804 (QERARLPKNQKAEAKTRMTM). Residues 898–928 (RENLRPRKKALEDELEHKKEEQEMFFRMNEE) are a coiled coil. The disordered stretch occupies residues 930–951 (AGHPFPSNKPAKFYSFSSPEAS).

Belongs to the protein kinase superfamily. STE Ser/Thr protein kinase family. STE20 subfamily. In terms of assembly, homodimer. Post-translationally, autophosphorylates. Phosphorylated by plk1/plx1, suggesting the existence of a feedback loop with plk1/plx1. activation of the protein.

Its subcellular location is the cell membrane. It carries out the reaction L-seryl-[protein] + ATP = O-phospho-L-seryl-[protein] + ADP + H(+). The enzyme catalyses L-threonyl-[protein] + ATP = O-phospho-L-threonyl-[protein] + ADP + H(+). Functionally, may act as a polo kinase kinase by mediating phosphorylation of plk1/plx1 and subsequent activation of plk1/plx1 during oocyte maturation. The chain is Serine/threonine-protein kinase 10 (stk10) from Xenopus tropicalis (Western clawed frog).